The primary structure comprises 355 residues: UDP-N-acetylglucosamine--N-acetylmuramyl-(pentapeptide) pyrophosphoryl-undecaprenol N-acetylglucosamine transferase (355 aa).

UDP-N-acetyl-alpha-D-glucosamine is bound by residues 13–15 (TGG), N125, R162, S190, I244, and Q289.

It belongs to the glycosyltransferase 28 family. MurG subfamily.

It is found in the cell inner membrane. It catalyses the reaction di-trans,octa-cis-undecaprenyl diphospho-N-acetyl-alpha-D-muramoyl-L-alanyl-D-glutamyl-meso-2,6-diaminopimeloyl-D-alanyl-D-alanine + UDP-N-acetyl-alpha-D-glucosamine = di-trans,octa-cis-undecaprenyl diphospho-[N-acetyl-alpha-D-glucosaminyl-(1-&gt;4)]-N-acetyl-alpha-D-muramoyl-L-alanyl-D-glutamyl-meso-2,6-diaminopimeloyl-D-alanyl-D-alanine + UDP + H(+). The protein operates within cell wall biogenesis; peptidoglycan biosynthesis. Its function is as follows. Cell wall formation. Catalyzes the transfer of a GlcNAc subunit on undecaprenyl-pyrophosphoryl-MurNAc-pentapeptide (lipid intermediate I) to form undecaprenyl-pyrophosphoryl-MurNAc-(pentapeptide)GlcNAc (lipid intermediate II). The sequence is that of UDP-N-acetylglucosamine--N-acetylmuramyl-(pentapeptide) pyrophosphoryl-undecaprenol N-acetylglucosamine transferase from Neisseria meningitidis serogroup C / serotype 2a (strain ATCC 700532 / DSM 15464 / FAM18).